A 373-amino-acid polypeptide reads, in one-letter code: MSANDRRDRRVRVAVVFGGRSNEHAISCVSAGSILRNLDSRRFDVIAVGITPAGSWVLTDANPDALTITNRELPQVKSGSGTELALPADPRRGGQLVSLPPGAGEVLESVDVVFPVLHGPYGEDGTIQGLLELAGVPYVGAGVLASAVGMDKEFTKKLLAADGLPVGAYAVLRPPRSTLHRQECERLGLPVFVKPARGGSSIGVSRVSSWDQLPAAVARARRHDPKVIVEAAISGRELECGVLEMPDGTLEASTLGEIRVAGVRGREDSFYDFATKYLDDAAELDVPAKVDDQVAEAIRQLAIRAFAAIDCRGLARVDFFLTDDGPVINEINTMPGFTTISMYPRMWAASGVDYPTLLATMIETALARGVGLH.

The region spanning 156 to 363 (KKLLAADGLP…YPTLLATMIE (208 aa)) is the ATP-grasp domain. 184-239 (CERLGLPVFVKPARGGSSIGVSRVSSWDQLPAAVARARRHDPKVIVEAAISGRELE) provides a ligand contact to ATP. D318, E330, and N332 together coordinate Mg(2+).

The protein belongs to the D-alanine--D-alanine ligase family. Requires Mg(2+) as cofactor. It depends on Mn(2+) as a cofactor.

It is found in the cytoplasm. The enzyme catalyses 2 D-alanine + ATP = D-alanyl-D-alanine + ADP + phosphate + H(+). Its pathway is cell wall biogenesis; peptidoglycan biosynthesis. Cell wall formation. This chain is D-alanine--D-alanine ligase, found in Mycobacterium bovis (strain BCG / Pasteur 1173P2).